We begin with the raw amino-acid sequence, 583 residues long: Isocitrate dehydrogenase kinase/phosphatase (583 aa).

ATP-binding positions include 315–321 (APGIRGM) and Lys336. Asp371 is an active-site residue.

Belongs to the AceK family.

The protein localises to the cytoplasm. The enzyme catalyses L-seryl-[isocitrate dehydrogenase] + ATP = O-phospho-L-seryl-[isocitrate dehydrogenase] + ADP + H(+). Its function is as follows. Bifunctional enzyme which can phosphorylate or dephosphorylate isocitrate dehydrogenase (IDH) on a specific serine residue. This is a regulatory mechanism which enables bacteria to bypass the Krebs cycle via the glyoxylate shunt in response to the source of carbon. When bacteria are grown on glucose, IDH is fully active and unphosphorylated, but when grown on acetate or ethanol, the activity of IDH declines drastically concomitant with its phosphorylation. This chain is Isocitrate dehydrogenase kinase/phosphatase, found in Salmonella agona (strain SL483).